The following is a 353-amino-acid chain: Chorismate synthase (353 aa).

Arginine 48 lines the NADP(+) pocket. Residues 128–130 (RAS), glycine 280, 295–299 (KPIPS), and arginine 321 contribute to the FMN site.

The protein belongs to the chorismate synthase family. In terms of assembly, homotetramer. It depends on FMNH2 as a cofactor.

The catalysed reaction is 5-O-(1-carboxyvinyl)-3-phosphoshikimate = chorismate + phosphate. It functions in the pathway metabolic intermediate biosynthesis; chorismate biosynthesis; chorismate from D-erythrose 4-phosphate and phosphoenolpyruvate: step 7/7. Functionally, catalyzes the anti-1,4-elimination of the C-3 phosphate and the C-6 proR hydrogen from 5-enolpyruvylshikimate-3-phosphate (EPSP) to yield chorismate, which is the branch point compound that serves as the starting substrate for the three terminal pathways of aromatic amino acid biosynthesis. This reaction introduces a second double bond into the aromatic ring system. This Nitratidesulfovibrio vulgaris (strain DSM 19637 / Miyazaki F) (Desulfovibrio vulgaris) protein is Chorismate synthase.